We begin with the raw amino-acid sequence, 315 residues long: WD repeat domain-containing protein 83 (315 aa).

WD repeat units lie at residues Cys-23–Thr-62, Gly-65–Lys-104, Gly-107–Val-146, Glu-151–Asp-188, Val-190–Glu-228, Gly-231–Ala-272, and Val-275–Gly-313.

This sequence belongs to the WD repeat MORG1 family. Interacts with EGLN3/PHD3. Interacts with ERK signaling proteins MAP2K1/MEK1, MAP2K2/MEK2, LAMTOR3, ARAF/Raf-1, MAPK1/ERK2 and MAPK3/ERK1. Identified in the spliceosome C complex. Interacts with PARD6B and CRB3. Interacts strongly with GTP-bound RRAGA but not with inactive GDP-bound. Interacts with p62/SQSTM1.

Its subcellular location is the cytoplasm. The protein resides in the lysosome. It is found in the nucleus. Molecular scaffold protein for various multimeric protein complexes. Acts as a module in the assembly of a multicomponent scaffold for the ERK pathway, linking ERK responses to specific agonists. At low concentrations it enhances ERK activation, whereas high concentrations lead to the inhibition of ERK activation. Also involved in response to hypoxia by acting as a negative regulator of HIF1A/HIF-1-alpha via its interaction with EGLN3/PHD3. May promote degradation of HIF1A. May act by recruiting signaling complexes to a specific upstream activator. May also be involved in pre-mRNA splicing. Participates in tight junction development by regulating apico-basal polarity, a key step in tissue development and organization. Mechanistically, regulates the translocation of PAR6-aPKC from the cytoplasm to the apical surface by acting as an adapter between PARD6B AND CRB3. Also acts as a negative regulator of mTORC1 under nutrient-rich conditions by binding to the active Rag GTPases to inhibit mTORC1 localization to the lysosome and phosphorylation of downstream targets. This facilitates constitutive basal autophagy during nutrient availability. In Homo sapiens (Human), this protein is WD repeat domain-containing protein 83 (WDR83).